A 346-amino-acid polypeptide reads, in one-letter code: Iron uptake protein A2 (346 aa).

Positions 1 to 31 (MTTKISRRTFFVGGTALTALVVANLPRRASA) form a signal peptide, tat-type signal. Residues His-43, Tyr-44, Tyr-169, Tyr-225, and Tyr-226 each coordinate Fe cation.

Belongs to the bacterial solute-binding protein 1 family. Predicted to be exported by the Tat system. The position of the signal peptide cleavage has not been experimentally proven.

The protein localises to the cellular thylakoid membrane. Its subcellular location is the periplasm. Functionally, probably part of a periplasmic ABC transporter complex futA1A2BC (TC 3.A.1.10.2) involved in Fe(3+) ion import (ferric iron). This protein and futA1 (slr1295) are subunit proteins that have redundant or overlapping substrate-binding functions. The differing subcellular locations of futA1 (predominantly thylakoid lumen) and futA2 (predominantly periplasmic) suggest they may fulfill different roles. Its function is as follows. Plays an important role in protecting the acceptor side of photosystem II (PSII) against oxidative damage, especially under iron-limiting growth conditions. Plays an undefined role in copper supply to thylakoid proteins. The protein is Iron uptake protein A2 (futA2) of Synechocystis sp. (strain ATCC 27184 / PCC 6803 / Kazusa).